The following is a 219-amino-acid chain: N-(5'-phosphoribosyl)anthranilate isomerase (219 aa).

The protein belongs to the TrpF family.

It carries out the reaction N-(5-phospho-beta-D-ribosyl)anthranilate = 1-(2-carboxyphenylamino)-1-deoxy-D-ribulose 5-phosphate. It participates in amino-acid biosynthesis; L-tryptophan biosynthesis; L-tryptophan from chorismate: step 3/5. This is N-(5'-phosphoribosyl)anthranilate isomerase from Chloroherpeton thalassium (strain ATCC 35110 / GB-78).